A 300-amino-acid chain; its full sequence is Free fatty acid receptor 1 (300 aa).

Residues 1 to 8 lie on the Extracellular side of the membrane; the sequence is MALSPQLF. The chain crosses the membrane as a helical span at residues 9–31; the sequence is FALYVSAFALGFPLNLLAIRGAV. Residues 32 to 41 are Cytoplasmic-facing; it reads ARARLRLTPN. The helical transmembrane segment at 42–64 threads the bilayer; the sequence is LVYTLHLACSDLLLAITLPVKAV. At 65–79 the chain is on the extracellular side; it reads EALASGAWPLPLPLC. A disulfide bond links cysteine 79 and cysteine 170. Residues 80 to 101 traverse the membrane as a helical segment; the sequence is PVFVLVHFAPLYAGGGFLAALS. Residues 102–121 are Cytoplasmic-facing; sequence AGRYLGAAFPFGYQAVRRPR. A helical membrane pass occupies residues 122–142; sequence YSWGVCVAIWALVLCHMGLVL. Residues 143–178 lie on the Extracellular side of the membrane; sequence GLEAPGGWLNTTSSSLGINTPVNGSPVCLEAWDPNS. Asparagine 152 carries N-linked (GlcNAc...) asparagine glycosylation. The chain crosses the membrane as a helical span at residues 179–200; it reads ARPARLSFSILLFFVPLVITAF. At 201–223 the chain is on the cytoplasmic side; sequence CYVGCLRALAHSGLSHKRKLRAA. Residues 224 to 248 traverse the membrane as a helical segment; that stretch reads WAAGGAFLTLLLCLGPYNASNVASF. Residues 249–256 are Extracellular-facing; the sequence is VNPDLGGS. A helical transmembrane segment spans residues 257-279; sequence WRKLGLITGSWSVVLNPLVTGYL. Residues 280–300 are Cytoplasmic-facing; that stretch reads GASPGRGTVCTTRTQGGTIQK.

Belongs to the G-protein coupled receptor 1 family.

It is found in the cell membrane. Its function is as follows. G-protein coupled receptor for medium and long chain saturated and unsaturated fatty acids that plays an important role in glucose homeostasis. Fatty acid binding increases glucose-stimulated insulin secretion, and may also enhance the secretion of glucagon-like peptide 1 (GLP-1). May also play a role in bone homeostasis; receptor signaling activates pathways that inhibit osteoclast differentiation. Ligand binding leads to a conformation change that triggers signaling via G-proteins that activate phospholipase C, leading to an increase of the intracellular calcium concentration. Seems to act through a G(q) and G(i)-mediated pathway. Mediates the anti-inflammatory effects of omega-3 polyunsaturated fatty acids (PUFAs) via inhibition of NLRP3 inflammasome activation. The sequence is that of Free fatty acid receptor 1 (FFAR1) from Mesocricetus auratus (Golden hamster).